A 290-amino-acid polypeptide reads, in one-letter code: Fructose-1,6-bisphosphatase class 1 (290 aa).

Residues glutamate 78, aspartate 96, leucine 98, and aspartate 99 each contribute to the Mg(2+) site. Substrate-binding positions include 99-102, tyrosine 201, and lysine 226; that span reads DGSS. Glutamate 232 is a binding site for Mg(2+).

It belongs to the FBPase class 1 family. Homotetramer. It depends on Mg(2+) as a cofactor.

It is found in the cytoplasm. It carries out the reaction beta-D-fructose 1,6-bisphosphate + H2O = beta-D-fructose 6-phosphate + phosphate. Its pathway is carbohydrate biosynthesis; gluconeogenesis. This chain is Fructose-1,6-bisphosphatase class 1, found in Helicobacter acinonychis (strain Sheeba).